Here is a 536-residue protein sequence, read N- to C-terminus: Pre-mRNA 3'-end-processing factor FIP1 (536 aa).

2 stretches are compositionally biased toward basic and acidic residues: residues Met1–Val10 and Val32–Leu42. Disordered stretches follow at residues Met1–Val95, Val212–Pro246, and Phe300–Glu536. Residues Met1–Gly110 are sufficient for interaction with PAPOLA. The segment at Met1–Pro296 is necessary for stimulating PAPOLA activity. Composition is skewed to acidic residues over residues Asp43–Asn54 and Thr80–Asp94. 3 positions are modified to phosphoserine: Ser84, Ser86, and Ser88. A sufficient for interaction with CPSF4 region spans residues Lys136 to Asn219. A compositionally biased stretch (pro residues) spans Phe300 to Leu344. Phosphotyrosine is present on Tyr366. Polar residues predominate over residues Leu374–Gln390. The tract at residues Ser383–Glu536 is sufficient for interaction with CPSF1 and CSTF3. Residues Tyr394–Ser434 show a composition bias toward basic and acidic residues. An arg/Asp/Glu-rich domain region spans residues Arg397 to Asp432. Residue Ser434 is modified to Phosphoserine. Thr436 carries the post-translational modification Phosphothreonine. Phosphoserine is present on residues Ser438 and Ser442. The span at Asp443–His470 shows a compositional bias: basic and acidic residues. Residues Lys484–Arg493 are compositionally biased toward basic residues. Phosphoserine is present on Ser496. Basic residues predominate over residues His502–Arg512.

It belongs to the FIP1 family. In terms of assembly, component of the cleavage and polyadenylation specificity factor (CPSF) complex, composed of CPSF1, CPSF2, CPSF3, CPSF4 and FIP1L1. Found in a complex with CPSF1, FIP1L1 and PAPOLA. Interacts with CPSF1, CPSF4, CSTF2 and CSTF3. Interacts with AHCYL1 (when phosphorylated); the interaction is direct and associates AHCYL1 with the CPSF complex and RNA. Interacts with PAPOLA; the interaction seems to be increased by the interaction with AHCYL1. Interacts with NUDT21/CPSF5; this interaction occurs in a RNA sequence-specific manner. Interacts (preferentially via unphosphorylated form and Arg/Glu/Asp-rich domain) with CPSF6 (via Arg/Ser-rich domain); this interaction mediates, at least in part, the interaction between the CFIm and CPSF complexes and may be inhibited by CPSF6 hyper-phosphorylation. Interacts (preferentially via unphosphorylated form and Arg/Asp/Glu-rich domain) with CPSF7 (via Arg/Ser-rich domain); this interaction mediates, at least in part, the interaction between the CFIm and CPSF complexes and may be inhibited by CPSF7 hyper-phosphorylation.

Its subcellular location is the nucleus. Functionally, component of the cleavage and polyadenylation specificity factor (CPSF) complex that plays a key role in pre-mRNA 3'-end formation, recognizing the AAUAAA signal sequence and interacting with poly(A) polymerase and other factors to bring about cleavage and poly(A) addition. FIP1L1 contributes to poly(A) site recognition and stimulates poly(A) addition. Binds to U-rich RNA sequence elements surrounding the poly(A) site. May act to tether poly(A) polymerase to the CPSF complex. This chain is Pre-mRNA 3'-end-processing factor FIP1 (Fip1l1), found in Rattus norvegicus (Rat).